We begin with the raw amino-acid sequence, 284 residues long: MKLVLVSGRSGSGKSVLLRMLEDLGYYCVDNLPLPMMGTLLKELSGNTNLVAISVDIRNLPEKESELIKHLTNLPDGVELLSFFLNSSDEVLLKRYNETRRLHPLSHDNVSLKEAIEIEGRSLEPLANIVDHYIDTSTLNIYDLNDQVREILLGNLDKELMINFESFGFKHGMPTEADFMFDVRFLPNPHWEPDLRPMTGLDKPVQDFLNERPRVNQFIKQIEDLLETWLPDLERNNRSYLTIAIGCTGGQHRSVYITERLAAHFKDGKHKIQVRHRELKNADH.

An ATP-binding site is contributed by 8-15 (GRSGSGKS). 56 to 59 (DIRN) is a GTP binding site.

It belongs to the RapZ-like family.

Its function is as follows. Displays ATPase and GTPase activities. This chain is Nucleotide-binding protein Shal_3708, found in Shewanella halifaxensis (strain HAW-EB4).